The sequence spans 173 residues: Mitochondrial import inner membrane translocase subunit TIM22-1 (173 aa).

A mitochondrion-targeting transit peptide spans 1–18 (MADSSAAEPTTGASSPPV). Residues 1–26 (MADSSAAEPTTGASSPPVASDENSTQ) form a disordered region. Helical transmembrane passes span 52 to 72 (VTSG…LGAL), 101 to 119 (SCKT…ECIV), 128 to 144 (TVNT…SMSA), and 151 to 168 (ACIG…IEKF).

Belongs to the Tim17/Tim22/Tim23 family. As to expression, expressed in young cotyledons, roots, flowers and leaves.

Its subcellular location is the mitochondrion inner membrane. Its function is as follows. Essential core component of the TIM22 complex, a complex that mediates the import and insertion of multi-pass transmembrane proteins into the mitochondrial inner membrane. This Arabidopsis thaliana (Mouse-ear cress) protein is Mitochondrial import inner membrane translocase subunit TIM22-1 (TIM22-1).